The following is a 371-amino-acid chain: Diguanylate cyclase A (371 aa).

Residues 233-366 (ETLSILMIDI…GRNRVTLSKN (134 aa)) enclose the GGDEF domain. Mg(2+) is bound by residues Asp-241, Ile-242, and Glu-284. The active-site Proton acceptor is Glu-284.

As to quaternary structure, exists as a homodimer and as larger aggregates. Both dimers and aggregates possess DGC activity. Mg(2+) is required as a cofactor. The cofactor is Mn(2+).

Its subcellular location is the cytoplasm. The catalysed reaction is 2 GTP = 3',3'-c-di-GMP + 2 diphosphate. Allosterically regulated by a feedback inhibition loop. In terms of biological role, catalyzes the conversion of GTP to cyclic-di-GMP (c-di-GMP). Shows activity under aerobic and anaerobic reaction conditions. The sequence is that of Diguanylate cyclase A from Treponema denticola (strain ATCC 35405 / DSM 14222 / CIP 103919 / JCM 8153 / KCTC 15104).